A 358-amino-acid polypeptide reads, in one-letter code: Arginine kinase (358 aa).

Positions 6-88 constitute a Phosphagen kinase N-terminal domain; that stretch reads SVEELWAKLD…LDAVIKEYHK (83 aa). A substrate-binding site is contributed by 61 to 65; it reads GVGIY. Residues 116 to 353 form the Phosphagen kinase C-terminal domain; the sequence is YIVSTRVRVG…EACLAKEKEL (238 aa). Residues 119–123 and H182 each bind ATP; that span reads STRVR. Residue E222 coordinates substrate. R226 provides a ligand contact to ATP. Residue C269 coordinates substrate. ATP-binding positions include 278-282 and 306-311; these read RASVH and RGIHGE. Residue E311 participates in substrate binding.

This sequence belongs to the ATP:guanido phosphotransferase family. In terms of assembly, monomer.

It carries out the reaction L-arginine + ATP = N(omega)-phospho-L-arginine + ADP + H(+). The protein is Arginine kinase of Haliotis madaka (Giant abalone).